We begin with the raw amino-acid sequence, 213 residues long: Orotate phosphoribosyltransferase (213 aa).

Residue K26 coordinates 5-phospho-alpha-D-ribose 1-diphosphate. An orotate-binding site is contributed by 34-35; it reads FF. 5-phospho-alpha-D-ribose 1-diphosphate is bound by residues 72 to 73, R99, K100, K103, H105, and 124 to 132; these read YK and DDVITAGTA. Positions 128 and 156 each coordinate orotate.

This sequence belongs to the purine/pyrimidine phosphoribosyltransferase family. PyrE subfamily. Homodimer. The cofactor is Mg(2+).

The catalysed reaction is orotidine 5'-phosphate + diphosphate = orotate + 5-phospho-alpha-D-ribose 1-diphosphate. The protein operates within pyrimidine metabolism; UMP biosynthesis via de novo pathway; UMP from orotate: step 1/2. In terms of biological role, catalyzes the transfer of a ribosyl phosphate group from 5-phosphoribose 1-diphosphate to orotate, leading to the formation of orotidine monophosphate (OMP). The protein is Orotate phosphoribosyltransferase of Pectobacterium carotovorum subsp. carotovorum (strain PC1).